The following is an 814-amino-acid chain: Immunoglobulin superfamily DCC subclass member 3 (814 aa).

The signal sequence occupies residues 1–35; the sequence is MAVQRAASPRRPPAPLWPRLLLPLLLLLLPAPSEG. Ig-like C2-type domains lie at 36–139, 140–220, 238–321, and 329–416; these read LGHS…ATMS, DFHV…IRIS, PAIL…RTAQ, and PAEF…ARLT. Disulfide bonds link Cys63/Cys117 and Cys160/Cys209. N-linked (GlcNAc...) asparagine glycosylation occurs at Asn93. Asn246 carries an N-linked (GlcNAc...) asparagine glycan. Cystine bridges form between Cys259–Cys307 and Cys351–Cys400. N-linked (GlcNAc...) asparagine glycosylation is found at Asn381 and Asn382. Fibronectin type-III domains follow at residues 426 to 520 and 523 to 618; these read PPRN…TLGE and APPP…ASER. N-linked (GlcNAc...) asparagine glycosylation is found at Asn580, Asn604, and Asn634. Residues 641–661 form a helical membrane-spanning segment; that stretch reads IVIGIHIGVTCIIFCVLFLLF. Disordered regions lie at residues 722–743 and 762–814; these read PPAS…APAP and GKTT…HSEQ. The span at 770–781 shows a compositional bias: low complexity; it reads TEATAPCAGLAA.

This sequence belongs to the immunoglobulin superfamily. DCC family.

Its subcellular location is the membrane. The protein is Immunoglobulin superfamily DCC subclass member 3 (IGDCC3) of Homo sapiens (Human).